A 204-amino-acid chain; its full sequence is Large ribosomal subunit protein eL15 (204 aa).

It belongs to the eukaryotic ribosomal protein eL15 family. As to quaternary structure, component of the large ribosomal subunit.

The protein localises to the cytoplasm. In terms of biological role, component of the large ribosomal subunit. The ribosome is a large ribonucleoprotein complex responsible for the synthesis of proteins in the cell. This is Large ribosomal subunit protein eL15 (rpl15) from Mylopharyngodon piceus (Black carp).